The chain runs to 380 residues: Cytochrome b (380 aa).

A run of 4 helical transmembrane segments spans residues 34 to 54 (FGSL…LLAM), 78 to 99 (WLIR…YLHI), 114 to 134 (WNTG…GYVL), and 179 to 199 (FFAL…IHLT). Positions 84 and 98 each coordinate heme b. The heme b site is built by His183 and His197. Residue His202 participates in a ubiquinone binding. Helical transmembrane passes span 227–247 (IKDI…ALFS), 289–309 (LGGV…PFLH), 321–341 (FSQL…WVGS), and 348–368 (FIII…ILFP).

The protein belongs to the cytochrome b family. The cytochrome bc1 complex contains 11 subunits: 3 respiratory subunits (MT-CYB, CYC1 and UQCRFS1), 2 core proteins (UQCRC1 and UQCRC2) and 6 low-molecular weight proteins (UQCRH/QCR6, UQCRB/QCR7, UQCRQ/QCR8, UQCR10/QCR9, UQCR11/QCR10 and a cleavage product of UQCRFS1). This cytochrome bc1 complex then forms a dimer. The cofactor is heme b.

It localises to the mitochondrion inner membrane. Component of the ubiquinol-cytochrome c reductase complex (complex III or cytochrome b-c1 complex) that is part of the mitochondrial respiratory chain. The b-c1 complex mediates electron transfer from ubiquinol to cytochrome c. Contributes to the generation of a proton gradient across the mitochondrial membrane that is then used for ATP synthesis. The polypeptide is Cytochrome b (MT-CYB) (Numida meleagris (Helmeted guineafowl)).